Consider the following 347-residue polypeptide: NADH-ubiquinone oxidoreductase chain 2 (347 aa).

The next 11 helical transmembrane spans lie at 3–23 (PLIF…VMIS), 25–45 (HWLM…PVLM), 59–79 (YFLT…INLL), 96–116 (IIMT…FWVP), 122–142 (VSLT…LSVL), 145–165 (IAPV…IMIG), 178–198 (ILAY…IFNP), 202–222 (LLNL…FMTV), 240–260 (ITTS…LTGF), 276–296 (IILA…YMRL), and 326–346 (LSPL…MMIL).

It belongs to the complex I subunit 2 family. As to quaternary structure, core subunit of respiratory chain NADH dehydrogenase (Complex I) which is composed of 45 different subunits. Interacts with TMEM242.

The protein resides in the mitochondrion inner membrane. It carries out the reaction a ubiquinone + NADH + 5 H(+)(in) = a ubiquinol + NAD(+) + 4 H(+)(out). Functionally, core subunit of the mitochondrial membrane respiratory chain NADH dehydrogenase (Complex I) which catalyzes electron transfer from NADH through the respiratory chain, using ubiquinone as an electron acceptor. Essential for the catalytic activity and assembly of complex I. In Peropteryx macrotis (Lesser dog-like bat), this protein is NADH-ubiquinone oxidoreductase chain 2.